Here is a 191-residue protein sequence, read N- to C-terminus: Putative RNA-binding protein EEED8.4 (191 aa).

In terms of domain architecture, RRM spans 55–132; that stretch reads KSVFIGNVDF…RPIVVTAKRT (78 aa). Positions 136-160 are disordered; it reads GMGHGVRGSSRGTFGRGRGAARGAP.

The protein is Putative RNA-binding protein EEED8.4 of Caenorhabditis elegans.